Here is an 88-residue protein sequence, read N- to C-terminus: Large ribosomal subunit protein bL31 (88 aa).

Positions 67-88 (MGSVDNATSEKKSATDETSKES) are disordered. Basic and acidic residues predominate over residues 74-88 (TSEKKSATDETSKES).

It belongs to the bacterial ribosomal protein bL31 family. Type A subfamily. In terms of assembly, part of the 50S ribosomal subunit.

Functionally, binds the 23S rRNA. The protein is Large ribosomal subunit protein bL31 of Synechococcus sp. (strain CC9311).